The following is a 226-amino-acid chain: MKAIKIAIDGPASSGKSTVAKIIAKNLGYTYLDTGAMYRSATYIALTHGYTGKEVALILEELEKNPIFFKKAKDGSQLVFLGDEDVTLAIRQNDVTNNVSWISALPEIREELVHQQRRIAQAGGIIMDGRDIGTVVLPDAELKIFLVASVEERAERRYKENLEKGIESDFETLKEEIAARDYKDSHRKVSPLKAAEDALIFDTTGVSIDGVVQFIQEKAEKIVDMS.

Residue 10 to 18 coordinates ATP; it reads GPASSGKST.

The protein belongs to the cytidylate kinase family. Type 1 subfamily.

It is found in the cytoplasm. It carries out the reaction CMP + ATP = CDP + ADP. The catalysed reaction is dCMP + ATP = dCDP + ADP. The polypeptide is Cytidylate kinase (Streptococcus pyogenes serotype M1).